The primary structure comprises 463 residues: Glutamate--tRNA ligase 1 (463 aa).

The 'HIGH' region signature appears at 10–20 (PSPTGYLHIGG). Residues 238 to 242 (KLSKR) carry the 'KMSKS' region motif. Lys241 lines the ATP pocket.

Belongs to the class-I aminoacyl-tRNA synthetase family. Glutamate--tRNA ligase type 1 subfamily. Monomer.

The protein localises to the cytoplasm. It catalyses the reaction tRNA(Glu) + L-glutamate + ATP = L-glutamyl-tRNA(Glu) + AMP + diphosphate. Its function is as follows. Catalyzes the attachment of glutamate to tRNA(Glu) in a two-step reaction: glutamate is first activated by ATP to form Glu-AMP and then transferred to the acceptor end of tRNA(Glu). This Helicobacter pylori (strain ATCC 700392 / 26695) (Campylobacter pylori) protein is Glutamate--tRNA ligase 1.